The following is a 309-amino-acid chain: MNEAEMLFSITVPGSTANLGPGFDSVGMALSRYLKLSVFRNDEWQFSAETETVAGIPQGTDNLIYQVAKRTADRYQKELPPAHVKVWSDIPLARGLGSSAAAIVAAIELADELCGLQLSESDKLHLASLEEGHPDNAAASLAGGLVIGLHEEGETHIVRVAEADIDVVAVIPFYEVLTRDARDVLPKELPYRHAVKASAVSNLLVAAIMSNDWALAGKMMRKDILHQPYRAMLVPELSKVEHAAEMKGAYGTALSGAGPTILVLIEKGKGEELRKQLSEHFPHCEIAALTVPSEGSVIERNPLEQVKSV.

91-101 (PLARGLGSSAA) is an ATP binding site.

The protein belongs to the GHMP kinase family. Homoserine kinase subfamily.

Its subcellular location is the cytoplasm. It carries out the reaction L-homoserine + ATP = O-phospho-L-homoserine + ADP + H(+). It functions in the pathway amino-acid biosynthesis; L-threonine biosynthesis; L-threonine from L-aspartate: step 4/5. Functionally, catalyzes the ATP-dependent phosphorylation of L-homoserine to L-homoserine phosphate. This Bacillus velezensis (strain DSM 23117 / BGSC 10A6 / LMG 26770 / FZB42) (Bacillus amyloliquefaciens subsp. plantarum) protein is Homoserine kinase.